The sequence spans 241 residues: Uridylate kinase (241 aa).

12–15 (KVSG) is an ATP binding site. Residues 20 to 25 (GEKGTG) form an involved in allosteric activation by GTP region. A UMP-binding site is contributed by G54. Positions 55 and 59 each coordinate ATP. UMP is bound by residues D74 and 135–142 (TGNPYFST). N163, Y169, and D172 together coordinate ATP.

It belongs to the UMP kinase family. Homohexamer.

It is found in the cytoplasm. It catalyses the reaction UMP + ATP = UDP + ADP. It functions in the pathway pyrimidine metabolism; CTP biosynthesis via de novo pathway; UDP from UMP (UMPK route): step 1/1. Allosterically activated by GTP. Inhibited by UTP. Its function is as follows. Catalyzes the reversible phosphorylation of UMP to UDP. The sequence is that of Uridylate kinase from Lactobacillus johnsonii (strain CNCM I-12250 / La1 / NCC 533).